A 158-amino-acid polypeptide reads, in one-letter code: 3-dehydroquinate dehydratase (158 aa).

Tyrosine 22 (proton acceptor) is an active-site residue. Positions 74, 80, and 87 each coordinate substrate. The Proton donor role is filled by histidine 100. Residues 101-102 (IS) and arginine 111 contribute to the substrate site.

Belongs to the type-II 3-dehydroquinase family. Homododecamer.

The catalysed reaction is 3-dehydroquinate = 3-dehydroshikimate + H2O. The protein operates within metabolic intermediate biosynthesis; chorismate biosynthesis; chorismate from D-erythrose 4-phosphate and phosphoenolpyruvate: step 3/7. Catalyzes a trans-dehydration via an enolate intermediate. The protein is 3-dehydroquinate dehydratase of Helicobacter hepaticus (strain ATCC 51449 / 3B1).